We begin with the raw amino-acid sequence, 490 residues long: Velvet complex subunit 2 (490 aa).

Disordered regions lie at residues L23–Q148 and Y295–P316. Residues P54–Q70 are compositionally biased toward basic residues. Residues A112 to D131 show a composition bias toward basic and acidic residues. The Velvet domain occupies A164–R474. The span at Y295–T313 shows a compositional bias: polar residues.

It belongs to the velvet family. VelB subfamily. In terms of assembly, component of the heterotrimeric velvet complex composed of LAE1, VEL1 and VEL2; VEL1 acting as a bridging protein between LAE1 and VEL2. Forms a heterodimeric complex with VOS1; the formation of the VEL2-VOS1 complex is light-dependent.

The protein resides in the nucleus. The protein localises to the cytoplasm. In terms of biological role, component of the velvet transcription factor complex that controls sexual/asexual developmental ratio in response to light, promoting sexual development in the darkness while stimulating asexual sporulation under illumination. The velvet complex acts as a global regulator for secondary metabolite gene expression. Component of the VEL2-VOS1 heterodimeric complex that plays a dual role in activating genes associated with spore maturation and repressing certain development-associated genes. The VEL2-VOS1 complex binds DNA through the DNA-binding domain of VOS1 that recognizes an 11-nucleotide consensus sequence 5'-CTGGCCGCGGC-3' consisting of two motifs in the promoters of key developmental regulatory genes. Regulates expression of cellulase-encoding genes such as the cellobiohydrolase-encoding genes cbh1 and cbh2, the endo-beta-1,4-glucanase-encoding genes egl1 and egl2, and the beta-glucosidase-encoding gene bgl1. The polypeptide is Velvet complex subunit 2 (Hypocrea jecorina (strain QM6a) (Trichoderma reesei)).